The primary structure comprises 323 residues: Phosphatidylethanolamine:ceramide ethanolaminephosphotransferase (323 aa).

Residues 1 to 26 are Cytoplasmic-facing; sequence MAVPPVEMYSGSFWNRMRKPLPLRTQ. Residues 27–47 traverse the membrane as a helical segment; it reads VIRFTVVFVIVSFILAVALQI. Residues 48–73 lie on the Extracellular side of the membrane; sequence THERMPDPKVTKPLPDLGFEVLHKYP. The helical transmembrane segment at 74-94 threads the bilayer; it reads FLFSVADCCIGFLNILSVFTA. Topologically, residues 95–147 are cytoplasmic; the sequence is FKLYLLHRHCVGSGEPELPCNIPGVSRFFLSVWLCKENCRIELRNVHTIAWIR. A helical membrane pass occupies residues 148 to 168; that stretch reads FITSYALLLLSRSVIMVVTSL. Residues 169-211 are Extracellular-facing; sequence PNPDDLCQDPPKIENRVKDVILTVLTAGAGSIHCGDLMYSGHT. The active site involves His210. Residues 212 to 232 form a helical membrane-spanning segment; sequence VILTLHLMFHWIYGAMVHWSF. Residue Arg233 is a topological domain, cytoplasmic. The helical transmembrane segment at 234 to 254 threads the bilayer; that stretch reads PVVTVVAIFGYYCIVASRFHY. Active-site residues include His253 and Asp257. Residues 255-257 lie on the Extracellular side of the membrane; it reads TDD. A helical membrane pass occupies residues 258 to 278; that stretch reads VLVAIYLTIATFIAVGHNADG. Residues 279–323 are Cytoplasmic-facing; that stretch reads APWQLQLFIRWLPCCGANSREVTEDGVPVAIVIKNEEMMNFEGKS.

The protein belongs to the sphingomyelin synthase family.

It localises to the membrane. Bidirectional lipid ethanolaminephosphotransferase capable of converting phosphatidylethanolamine (PE) and ceramide to ethanolamine-phosphorylceramide (EPC) and diacylglycerol (DAG) and vice versa. Direction is dependent on the relative concentrations of DAG and ceramide as phosphoethanolamine acceptors. Does not function strictly as a SM synthase. Essential for viability of the pathogenic bloodstream stage of this human protozoan parasite and, consequently, can be considered as potential drug target. This Trypanosoma brucei brucei (strain 927/4 GUTat10.1) protein is Phosphatidylethanolamine:ceramide ethanolaminephosphotransferase.